A 165-amino-acid chain; its full sequence is Photosystem I assembly protein Ycf3 (165 aa).

TPR repeat units follow at residues 32 to 65 (AFTY…EIDP), 69 to 102 (SYIL…NPFL), and 117 to 150 (GEQA…TPGN).

It belongs to the Ycf3 family.

It localises to the plastid. The protein localises to the chloroplast thylakoid membrane. Functionally, essential for the assembly of the photosystem I (PSI) complex. May act as a chaperone-like factor to guide the assembly of the PSI subunits. The sequence is that of Photosystem I assembly protein Ycf3 from Spinacia oleracea (Spinach).